The sequence spans 186 residues: Ran guanine nucleotide release factor (186 aa).

Residues Asp27–Asp70 form an interaction with RAN region.

This sequence belongs to the MOG1 family. In terms of assembly, monomer. Interacts with RAN, both RAN-GTP and RAN-GDP. Competes with RCC1 for a common binding site on RAN and thereby inhibits RCC1-mediated nucleotide exchange. Forms a complex with RAN-GTP and RANBP1. Interacts with the cytoplasmic loop 2 of SCN5A. Isoform 1 and isoform 2 are ubiquitously expressed. Detected in heart and brain.

The protein resides in the nucleus. It is found in the cytoplasm. Its subcellular location is the perinuclear region. The protein localises to the cell membrane. Its function is as follows. May regulate the intracellular trafficking of RAN. Promotes guanine nucleotide release from RAN and inhibits binding of new GTP by preventing the binding of the RAN guanine nucleotide exchange factor RCC1. Regulates the levels of GTP-bound RAN in the nucleus, and thereby plays a role in the regulation of RAN-dependent mitotic spindle dynamics. Enhances the expression of SCN5A at the cell membrane in cardiomyocytes. The sequence is that of Ran guanine nucleotide release factor (RANGRF) from Homo sapiens (Human).